Consider the following 349-residue polypeptide: Anthranilate phosphoribosyltransferase (349 aa).

5-phospho-alpha-D-ribose 1-diphosphate contacts are provided by residues glycine 84, 87–88 (GD), threonine 92, 94–97 (NIST), 112–120 (KHGNRAASS), and serine 124. Glycine 84 contacts anthranilate. Serine 96 lines the Mg(2+) pocket. Asparagine 115 provides a ligand contact to anthranilate. Residue arginine 170 participates in anthranilate binding. Mg(2+) contacts are provided by aspartate 228 and glutamate 229.

This sequence belongs to the anthranilate phosphoribosyltransferase family. Homodimer. Requires Mg(2+) as cofactor.

The catalysed reaction is N-(5-phospho-beta-D-ribosyl)anthranilate + diphosphate = 5-phospho-alpha-D-ribose 1-diphosphate + anthranilate. It functions in the pathway amino-acid biosynthesis; L-tryptophan biosynthesis; L-tryptophan from chorismate: step 2/5. Functionally, catalyzes the transfer of the phosphoribosyl group of 5-phosphorylribose-1-pyrophosphate (PRPP) to anthranilate to yield N-(5'-phosphoribosyl)-anthranilate (PRA). The polypeptide is Anthranilate phosphoribosyltransferase (Leifsonia xyli subsp. xyli (strain CTCB07)).